Reading from the N-terminus, the 372-residue chain is SAM domain-containing protein SAMSN-1 (372 aa).

The interval 1-71 (MLKRKPSNAS…SGGSLGKKVR (71 aa)) is disordered. The Important for interaction with 14-3-3 proteins motif lies at 20–25 (RSSSFG). 2 positions are modified to phosphoserine: serine 23 and serine 34. Basic and acidic residues predominate over residues 37 to 49 (KSDDSIEVHDREL). Over residues 52 to 63 (GSEEQSKTSSSG) the composition is skewed to low complexity. The residue at position 74 (serine 74) is a Phosphoserine. Threonine 76 is subject to Phosphothreonine. Residues serine 90, serine 97, and serine 119 each carry the phosphoserine modification. A disordered region spans residues 90-111 (SEEKEEESGEEALPYRNSDPMI). Residues 129–146 (LYSGQSSSSGITSCSDGT) are compositionally biased toward low complexity. The segment at 129 to 153 (LYSGQSSSSGITSCSDGTSNRDSFR) is disordered. Tyrosine 160 bears the Phosphotyrosine mark. The SH3 domain maps to 163–224 (PFCGRAKVHT…KFIYVDVILE (62 aa)). Residues 241–305 (ENHQTIQEFL…LSAAESLLDE (65 aa)) enclose the SAM domain. The interval 304-372 (DEETTVEHEK…QKIAITESSD (69 aa)) is disordered. A compositionally biased stretch (polar residues) spans 317–329 (PLSSNPDILSASQ).

As to quaternary structure, interacts with FASLG. Interacts with phosphotyrosine containing proteins. Interacts (via SH3 domain) with CTTN. Interacts (phosphorylated at Ser-23) with YWHAB, YWHAE, YWHAG, YWHAH, YWHAZ and SFN. Interacts directly with SAP30 and HDAC1. Identified in a complex with SAP30 and HDAC1. As to expression, detected in spleen and lymph node (at protein level).

The protein localises to the nucleus. It localises to the cytoplasm. The protein resides in the cell projection. It is found in the ruffle. Its function is as follows. Negative regulator of B-cell activation. Down-regulates cell proliferation (in vitro). Promotes RAC1-dependent membrane ruffle formation and reorganization of the actin cytoskeleton. Regulates cell spreading and cell polarization. Stimulates HDAC1 activity. Regulates LYN activity by modulating its tyrosine phosphorylation. This chain is SAM domain-containing protein SAMSN-1 (Samsn1), found in Mus musculus (Mouse).